A 135-amino-acid chain; its full sequence is Small ribosomal subunit protein uS12 (135 aa).

Positions 1–29 are disordered; that stretch reads MPTINQLVRKGREKVEKKSKAPALQGNPQ. Aspartate 89 bears the 3-methylthioaspartic acid mark. The segment at 106–135 is disordered; that stretch reads GVKDRKQSRSKYGAKRPKPGQAAATTGKKK. Over residues 113-123 the composition is skewed to basic residues; sequence SRSKYGAKRPK.

The protein belongs to the universal ribosomal protein uS12 family. In terms of assembly, part of the 30S ribosomal subunit. Contacts proteins S8 and S17. May interact with IF1 in the 30S initiation complex.

With S4 and S5 plays an important role in translational accuracy. Functionally, interacts with and stabilizes bases of the 16S rRNA that are involved in tRNA selection in the A site and with the mRNA backbone. Located at the interface of the 30S and 50S subunits, it traverses the body of the 30S subunit contacting proteins on the other side and probably holding the rRNA structure together. The combined cluster of proteins S8, S12 and S17 appears to hold together the shoulder and platform of the 30S subunit. The protein is Small ribosomal subunit protein uS12 of Sulfurihydrogenibium sp. (strain YO3AOP1).